We begin with the raw amino-acid sequence, 951 residues long: 2-oxoglutarate dehydrogenase E1 component (951 aa).

Residues 906 to 925 (RRRRSSPAEGNPTAHKQEQA) form a disordered region.

Belongs to the alpha-ketoglutarate dehydrogenase family. In terms of assembly, homodimer. Part of the 2-oxoglutarate dehydrogenase (OGDH) complex composed of E1 (2-oxoglutarate dehydrogenase), E2 (dihydrolipoamide succinyltransferase) and E3 (dihydrolipoamide dehydrogenase); the complex contains multiple copies of the three enzymatic components (E1, E2 and E3). Requires thiamine diphosphate as cofactor.

The enzyme catalyses N(6)-[(R)-lipoyl]-L-lysyl-[protein] + 2-oxoglutarate + H(+) = N(6)-[(R)-S(8)-succinyldihydrolipoyl]-L-lysyl-[protein] + CO2. E1 component of the 2-oxoglutarate dehydrogenase (OGDH) complex which catalyzes the decarboxylation of 2-oxoglutarate, the first step in the conversion of 2-oxoglutarate to succinyl-CoA and CO(2). This is 2-oxoglutarate dehydrogenase E1 component from Exiguobacterium sp. (strain ATCC BAA-1283 / AT1b).